Consider the following 85-residue polypeptide: UPF0291 protein SEQ_0545 (85 aa).

A disordered region spans residues 62–85 (TPEKLRQVQREKGLHGRSLDDPES).

It belongs to the UPF0291 family.

Its subcellular location is the cytoplasm. In Streptococcus equi subsp. equi (strain 4047), this protein is UPF0291 protein SEQ_0545.